A 185-amino-acid polypeptide reads, in one-letter code: Large ribosomal subunit protein uL6 (185 aa).

The protein belongs to the universal ribosomal protein uL6 family. Part of the 50S ribosomal subunit.

In terms of biological role, this protein binds to the 23S rRNA, and is important in its secondary structure. It is located near the subunit interface in the base of the L7/L12 stalk, and near the tRNA binding site of the peptidyltransferase center. This Deinococcus deserti (strain DSM 17065 / CIP 109153 / LMG 22923 / VCD115) protein is Large ribosomal subunit protein uL6.